The sequence spans 318 residues: L-malyl-CoA/beta-methylmalyl-CoA lyase (318 aa).

Residues phenylalanine 19, arginine 24, lysine 30, and arginine 76 each coordinate substrate. Residues glutamate 141 and aspartate 168 each contribute to the Mg(2+) site. Substrate-binding positions include 167–168 (AD) and 251–252 (IH).

Belongs to the HpcH/HpaI aldolase family. In terms of assembly, homohexamer. Dimer of trimers. Mg(2+) serves as cofactor. The cofactor is Mn(2+).

The enzyme catalyses (S)-malyl-CoA = glyoxylate + acetyl-CoA. It catalyses the reaction (2R,3S)-beta-methylmalyl-CoA = propanoyl-CoA + glyoxylate. Its function is as follows. Involved in the ethylmalonyl-CoA pathway for acetate assimilation. Catalyzes the reversible condensation of glyoxylate and acetyl-CoA to L-malyl-CoA and the reversible condensation of glyoxylate and propionyl-CoA to yield beta-methylmalyl-CoA. This Cereibacter sphaeroides (strain ATCC 17025 / ATH 2.4.3) (Rhodobacter sphaeroides) protein is L-malyl-CoA/beta-methylmalyl-CoA lyase.